The chain runs to 438 residues: sn-glycerol-3-phosphate-binding periplasmic protein UgpB (438 aa).

Positions methionine 1–alanine 23 are cleaved as a signal peptide. Tyrosine 65, glutamate 89, serine 144, serine 270, glycine 307, tyrosine 346, and arginine 397 together coordinate sn-glycerol 3-phosphate.

Belongs to the bacterial solute-binding protein 1 family. As to quaternary structure, the complex is composed of two ATP-binding proteins (UgpC), two transmembrane proteins (UgpA and UgpE) and a solute-binding protein (UgpB).

It is found in the periplasm. In terms of biological role, part of the ABC transporter complex UgpBAEC involved in sn-glycerol-3-phosphate (G3P) import. Binds G3P. The sequence is that of sn-glycerol-3-phosphate-binding periplasmic protein UgpB (ugpB) from Escherichia coli O157:H7.